A 705-amino-acid polypeptide reads, in one-letter code: Elongation factor G (705 aa).

In terms of domain architecture, tr-type G spans 8 to 290; it reads EKYRNIGICA…GVVEYLPAPN (283 aa). GTP-binding positions include 17 to 24, 88 to 92, and 142 to 145; these read AHVDAGKT, DTPGH, and NKMD.

Belongs to the TRAFAC class translation factor GTPase superfamily. Classic translation factor GTPase family. EF-G/EF-2 subfamily.

Its subcellular location is the cytoplasm. Its function is as follows. Catalyzes the GTP-dependent ribosomal translocation step during translation elongation. During this step, the ribosome changes from the pre-translocational (PRE) to the post-translocational (POST) state as the newly formed A-site-bound peptidyl-tRNA and P-site-bound deacylated tRNA move to the P and E sites, respectively. Catalyzes the coordinated movement of the two tRNA molecules, the mRNA and conformational changes in the ribosome. The chain is Elongation factor G from Francisella philomiragia subsp. philomiragia (strain ATCC 25017 / CCUG 19701 / FSC 153 / O#319-036).